Reading from the N-terminus, the 456-residue chain is Bifunctional protein GlmU (456 aa).

The interval 1 to 231 (MERTCLAIIL…EEELTGCNTR (231 aa)) is pyrophosphorylase. UDP-N-acetyl-alpha-D-glucosamine-binding positions include 10 to 13 (LAAG), lysine 24, glutamine 77, and 82 to 83 (GT). Aspartate 107 provides a ligand contact to Mg(2+). Glycine 143, glutamate 157, asparagine 172, and asparagine 229 together coordinate UDP-N-acetyl-alpha-D-glucosamine. Asparagine 229 is a Mg(2+) binding site. Residues 232 to 252 (AELAYIERLWQQRRRHELMLA) form a linker region. Residues 253-456 (GVSMVAPETV…LARKIAKAAE (204 aa)) are N-acetyltransferase. Positions 318 and 336 each coordinate UDP-N-acetyl-alpha-D-glucosamine. The active-site Proton acceptor is the histidine 348. Residues tyrosine 351 and asparagine 362 each contribute to the UDP-N-acetyl-alpha-D-glucosamine site. Residues alanine 365, 371–372 (NY), serine 390, serine 408, and arginine 425 contribute to the acetyl-CoA site.

The protein in the N-terminal section; belongs to the N-acetylglucosamine-1-phosphate uridyltransferase family. In the C-terminal section; belongs to the transferase hexapeptide repeat family. Homotrimer. Mg(2+) is required as a cofactor.

Its subcellular location is the cytoplasm. It catalyses the reaction alpha-D-glucosamine 1-phosphate + acetyl-CoA = N-acetyl-alpha-D-glucosamine 1-phosphate + CoA + H(+). The enzyme catalyses N-acetyl-alpha-D-glucosamine 1-phosphate + UTP + H(+) = UDP-N-acetyl-alpha-D-glucosamine + diphosphate. It functions in the pathway nucleotide-sugar biosynthesis; UDP-N-acetyl-alpha-D-glucosamine biosynthesis; N-acetyl-alpha-D-glucosamine 1-phosphate from alpha-D-glucosamine 6-phosphate (route II): step 2/2. It participates in nucleotide-sugar biosynthesis; UDP-N-acetyl-alpha-D-glucosamine biosynthesis; UDP-N-acetyl-alpha-D-glucosamine from N-acetyl-alpha-D-glucosamine 1-phosphate: step 1/1. Its pathway is bacterial outer membrane biogenesis; LPS lipid A biosynthesis. Functionally, catalyzes the last two sequential reactions in the de novo biosynthetic pathway for UDP-N-acetylglucosamine (UDP-GlcNAc). The C-terminal domain catalyzes the transfer of acetyl group from acetyl coenzyme A to glucosamine-1-phosphate (GlcN-1-P) to produce N-acetylglucosamine-1-phosphate (GlcNAc-1-P), which is converted into UDP-GlcNAc by the transfer of uridine 5-monophosphate (from uridine 5-triphosphate), a reaction catalyzed by the N-terminal domain. The sequence is that of Bifunctional protein GlmU from Sinorhizobium medicae (strain WSM419) (Ensifer medicae).